Consider the following 300-residue polypeptide: N-acetylmannosamine kinase (300 aa).

Residues 5 to 12 and 132 to 139 contribute to the ATP site; these read ALDIGGTK and GVGGGIVL. Zn(2+) is bound by residues H156, C166, C168, and C173.

It belongs to the ROK (NagC/XylR) family. NanK subfamily. Homodimer.

The catalysed reaction is an N-acyl-D-mannosamine + ATP = an N-acyl-D-mannosamine 6-phosphate + ADP + H(+). The protein operates within amino-sugar metabolism; N-acetylneuraminate degradation; D-fructose 6-phosphate from N-acetylneuraminate: step 2/5. In terms of biological role, catalyzes the phosphorylation of N-acetylmannosamine (ManNAc) to ManNAc-6-P. This chain is N-acetylmannosamine kinase, found in Haemophilus influenzae (strain 86-028NP).